The chain runs to 458 residues: Retinoic acid receptor gamma (458 aa).

Residues M1 to P89 form a modulating region. Position 34 is an omega-N-methylarginine (R34). Residues M58 to P83 form a disordered region. Residues S62 to E71 show a composition bias toward polar residues. NR C4-type zinc fingers lie at residues C90 to C110 and C126 to C150. Positions C90–M155 form a DNA-binding region, nuclear receptor. A hinge region spans residues S156 to P184. Residues R161–Y180 are disordered. Residues K172 and K401 each participate in a glycyl lysine isopeptide (Lys-Gly) (interchain with G-Cter in SUMO2) cross-link. The region spanning Q185–P419 is the NR LBD domain. Residues P409 to P458 are disordered. Residues R448–P458 are compositionally biased toward polar residues.

Belongs to the nuclear hormone receptor family. NR1 subfamily. As to quaternary structure, homodimer. Heterodimer with a RXR molecule. Binds DNA preferentially as a RAR/RXR heterodimer. Forms a complex with PUS1 and the SRA1 RNA in the nucleus.

It is found in the nucleus. The protein resides in the cytoplasm. Functionally, receptor for retinoic acid. Retinoic acid receptors bind as heterodimers to their target response elements in response to their ligands, all-trans or 9-cis retinoic acid, and regulate gene expression in various biological processes. The RAR/RXR heterodimers bind to the retinoic acid response elements (RARE) composed of tandem 5'-AGGTCA-3' sites known as DR1-DR5. In the absence of ligand, acts mainly as an activator of gene expression due to weak binding to corepressors. Required for limb bud development. In concert with RARA or RARB, required for skeletal growth, matrix homeostasis and growth plate function. The polypeptide is Retinoic acid receptor gamma (Rarg) (Mus musculus (Mouse)).